Reading from the N-terminus, the 189-residue chain is Interferon alpha-5 (189 aa).

The first 21 residues, 1 to 21, serve as a signal peptide directing secretion; the sequence is MALPFVLLMALVVLNCKSICS. 2 disulfides stabilise this stretch: Cys24–Cys122 and Cys52–Cys162.

It belongs to the alpha/beta interferon family.

Its subcellular location is the secreted. In terms of biological role, produced by macrophages, IFN-alpha have antiviral activities. Interferon stimulates the production of two enzymes: a protein kinase and an oligoadenylate synthetase. The sequence is that of Interferon alpha-5 (IFNA5) from Homo sapiens (Human).